Reading from the N-terminus, the 549-residue chain is Cation/acetate symporter ActP (549 aa).

Transmembrane regions (helical) follow at residues 33–53 (WQAIIMFLIFVVFTLGITYWA), 77–97 (LAIAGDYMSAASFLGISALVF), 103–123 (GLIYSLGFLVGWPIILFLIAE), 148–168 (ILSACGSLVVVALYLIAQMVG), 183–203 (IAVVLVGVLMMMYVLFGGMLA), 206–226 (WVQIIKAVLLLFGASFMAFMV), 262–282 (ISALSLGLGLMFGTAGLPHIL), 303–323 (GFMGYFYILTFIIGFGAIMLV), 355–375 (LFLGFISAVAFATILAVVAGL), 404–424 (VSKITVLVLGVIAIILGVLFE), 428–448 (IAFMVGLAFAIAASCNFPIIL), 464–484 (GGWLGLLTAVVLMILGPTIWV), and 493–513 (IFPYEYPALFSISVAFLGIWF).

This sequence belongs to the sodium:solute symporter (SSF) (TC 2.A.21) family.

Its subcellular location is the cell inner membrane. In terms of biological role, transports acetate. The polypeptide is Cation/acetate symporter ActP (Salmonella arizonae (strain ATCC BAA-731 / CDC346-86 / RSK2980)).